The following is a 309-amino-acid chain: Methionyl-tRNA formyltransferase (309 aa).

Position 109 to 112 (109 to 112) interacts with (6S)-5,6,7,8-tetrahydrofolate; sequence SLLP.

Belongs to the Fmt family.

The enzyme catalyses L-methionyl-tRNA(fMet) + (6R)-10-formyltetrahydrofolate = N-formyl-L-methionyl-tRNA(fMet) + (6S)-5,6,7,8-tetrahydrofolate + H(+). Attaches a formyl group to the free amino group of methionyl-tRNA(fMet). The formyl group appears to play a dual role in the initiator identity of N-formylmethionyl-tRNA by promoting its recognition by IF2 and preventing the misappropriation of this tRNA by the elongation apparatus. The protein is Methionyl-tRNA formyltransferase of Clostridium botulinum (strain Alaska E43 / Type E3).